A 513-amino-acid chain; its full sequence is ATP synthase subunit alpha 2 (513 aa).

169-176 (GDRQCGKT) is an ATP binding site.

This sequence belongs to the ATPase alpha/beta chains family. F-type ATPases have 2 components, CF(1) - the catalytic core - and CF(0) - the membrane proton channel. CF(1) has five subunits: alpha(3), beta(3), gamma(1), delta(1), epsilon(1). CF(0) has three main subunits: a(1), b(2) and c(9-12). The alpha and beta chains form an alternating ring which encloses part of the gamma chain. CF(1) is attached to CF(0) by a central stalk formed by the gamma and epsilon chains, while a peripheral stalk is formed by the delta and b chains.

It is found in the cell inner membrane. It catalyses the reaction ATP + H2O + 4 H(+)(in) = ADP + phosphate + 5 H(+)(out). Its function is as follows. Produces ATP from ADP in the presence of a proton gradient across the membrane. The alpha chain is a regulatory subunit. In Paraburkholderia xenovorans (strain LB400), this protein is ATP synthase subunit alpha 2.